The chain runs to 338 residues: Taste receptor type 2 member 39 (338 aa).

Over 1–30 (MLGRCFPPDTKEKQQLRMTKLCDPAESELS) the chain is Extracellular. Residues 31-51 (PFLITLILAVLLAEYLIGIIA) form a helical membrane-spanning segment. Over 52–74 (NGFIMAIHAAEWVQNKAVSTSGR) the chain is Cytoplasmic. Residues 75–95 (ILVFLSVSRIALQSLMMLEIT) traverse the membrane as a helical segment. The Extracellular portion of the chain corresponds to 96-116 (ISSTSLSFYSEDAVYYAFKIS). The helical transmembrane segment at 117-137 (FIFLNFCSLWFAAWLSFFYFV) threads the bilayer. The Cytoplasmic segment spans residues 138–156 (KIANFSYPLFLKLRWRITG). Residues 157-177 (LIPWLLWLSVFISFSHSMFCI) form a helical membrane-spanning segment. Residues 178 to 205 (NICTVYCNNSFPIHSSNSTKKTYLSEIN) are Extracellular-facing. N185 and N194 each carry an N-linked (GlcNAc...) asparagine glycan. The helical transmembrane segment at 206–226 (VVGLAFFFNLGIVTPLIMFIL) threads the bilayer. Topologically, residues 227–262 (TATLLILSLKRHTLHMGSNATGSNDPSMEAHMGAIK) are cytoplasmic. A helical transmembrane segment spans residues 263 to 283 (AISYFLILYIFNAVALFIYLS). Over 284 to 291 (NMFDINSL) the chain is Extracellular. A helical membrane pass occupies residues 292-312 (WNNLCQIIMAAYPAGHSILPI). At 313-338 (QDNPGLRRAWKRLQLRLHLYPKEWTL) the chain is on the cytoplasmic side.

Belongs to the G-protein coupled receptor T2R family.

The protein resides in the membrane. In terms of biological role, receptor that may play a role in the perception of bitterness and is gustducin-linked. May play a role in sensing the chemical composition of the gastrointestinal content. The activity of this receptor may stimulate alpha gustducin, mediate PLC-beta-2 activation and lead to the gating of TRPM5. The polypeptide is Taste receptor type 2 member 39 (TAS2R39) (Pan paniscus (Pygmy chimpanzee)).